The primary structure comprises 335 residues: PA-phosphatase related-family protein DDB_G0275547 (335 aa).

Helical transmembrane passes span 43-63 (VMYL…GILF), 93-113 (VLIP…SLIV), 124-144 (ILGL…FKCF), 202-222 (SITA…FKIF), 226-246 (GHIF…LIGI), and 254-274 (HTFL…LSCY).

It belongs to the PA-phosphatase related phosphoesterase family.

It localises to the membrane. The sequence is that of PA-phosphatase related-family protein DDB_G0275547 from Dictyostelium discoideum (Social amoeba).